We begin with the raw amino-acid sequence, 856 residues long: Phospholipase D gamma 2 (856 aa).

The 141-residue stretch at 21-161 (PLATSSGSLM…CSGNRIEGLF (141 aa)) folds into the C2 domain. Asp223 is a Ca(2+) binding site. The region spanning 362 to 397 (TIYTHHQKTMIVDAEAAQNRRKIVAFVGGLDLCNGR) is the PLD phosphodiesterase 1 domain. Catalysis depends on residues His367, Lys369, and Asp374. His367 is a binding site for a 1,2-diacyl-sn-glycero-3-phosphate. Positions 403 and 435 each coordinate Ca(2+). Gln562 and His707 together coordinate a 1,2-diacyl-sn-glycero-3-phosphate. In terms of domain architecture, PLD phosphodiesterase 2 spans 702-729 (FMIYVHSKGMVVDDEFVLIGSANINQRS). Catalysis depends on residues His707, Lys709, and Asp714. Glu770 contributes to the Ca(2+) binding site.

This sequence belongs to the phospholipase D family. C2-PLD subfamily. Requires Ca(2+) as cofactor. In terms of tissue distribution, highly expressed in roots and flowers, moderately in stems, leaves and seedlings and low in siliques. Not detected in seeds.

It is found in the cytoplasm. The protein localises to the membrane. It catalyses the reaction a 1,2-diacyl-sn-glycero-3-phosphocholine + H2O = a 1,2-diacyl-sn-glycero-3-phosphate + choline + H(+). Its activity is regulated as follows. Inhibited by neomycin. Hydrolyzes glycerol-phospholipids at the terminal phosphodiesteric bond to generate phosphatidic acids (PA). Plays an important role in various cellular processes, including phytohormone action, vesicular trafficking, secretion, cytoskeletal arrangement, meiosis, tumor promotion, pathogenesis, membrane deterioration and senescence. Can use phosphatidylserine but prefers ethanolamine-containing lipids as substrates. Can use phosphatidylcholine (PC) as substrates in the presence of phosphatidylethanolamine (PE) and PIP2. Involved in membrane lipid modulation under aluminum (Al) stress and negatively modulate plant tolerance to Al. The protein is Phospholipase D gamma 2 of Arabidopsis thaliana (Mouse-ear cress).